The following is a 90-amino-acid chain: Probable Fe(2+)-trafficking protein (90 aa).

The protein belongs to the Fe(2+)-trafficking protein family.

Its function is as follows. Could be a mediator in iron transactions between iron acquisition and iron-requiring processes, such as synthesis and/or repair of Fe-S clusters in biosynthetic enzymes. In Pseudoalteromonas atlantica (strain T6c / ATCC BAA-1087), this protein is Probable Fe(2+)-trafficking protein.